A 196-amino-acid polypeptide reads, in one-letter code: uncharacterized protein (196 aa).

It to H.influenzae HI_0431.

This is an uncharacterized protein from Escherichia coli (strain K12).